A 153-amino-acid polypeptide reads, in one-letter code: Interleukin-2 (153 aa).

The first 20 residues, 1 to 20, serve as a signal peptide directing secretion; the sequence is MYRMQLLSCIALSLALVTNS. Thr23 carries an O-linked (GalNAc...) threonine glycan. Cys78 and Cys125 are oxidised to a cystine.

Belongs to the IL-2 family.

It is found in the secreted. Its function is as follows. Cytokine produced by activated CD4-positive helper T-cells and to a lesser extend activated CD8-positive T-cells and natural killer (NK) cells that plays pivotal roles in the immune response and tolerance. Binds to a receptor complex composed of either the high-affinity trimeric IL-2R (IL2RA/CD25, IL2RB/CD122 and IL2RG/CD132) or the low-affinity dimeric IL-2R (IL2RB and IL2RG). Interaction with the receptor leads to oligomerization and conformation changes in the IL-2R subunits resulting in downstream signaling starting with phosphorylation of JAK1 and JAK3. In turn, JAK1 and JAK3 phosphorylate the receptor to form a docking site leading to the phosphorylation of several substrates including STAT5. This process leads to activation of several pathways including STAT, phosphoinositide-3-kinase/PI3K and mitogen-activated protein kinase/MAPK pathways. Functions as a T-cell growth factor and can increase NK-cell cytolytic activity as well. Promotes strong proliferation of activated B-cells and subsequently immunoglobulin production. Plays a pivotal role in regulating the adaptive immune system by controlling the survival and proliferation of regulatory T-cells, which are required for the maintenance of immune tolerance. Moreover, participates in the differentiation and homeostasis of effector T-cell subsets, including Th1, Th2, Th17 as well as memory CD8-positive T-cells. This Homo sapiens (Human) protein is Interleukin-2 (IL2).